We begin with the raw amino-acid sequence, 1338 residues long: Centrosomal P4.1-associated protein (1338 aa).

Disordered regions lie at residues 78 to 99 and 190 to 211; these read QKLE…HTGF and GLSL…TTTG. Phosphoserine occurs at positions 260 and 317. Residues 320-395 form an alpha/beta-tubulin binding region; the sequence is VANIEERPIK…FTNAKSKFQK (76 aa). 3 disordered regions span residues 387-415, 437-480, and 522-552; these read TNAK…PLFK, PILK…QTGK, and QGKD…ESES. Polar residues predominate over residues 401–410; sequence LVTNQSTSED. Residue Ser-541 is modified to Phosphoserine. The segment covering 542–551 has biased composition (basic and acidic residues); the sequence is PIRETMKESE. Phosphoserine; by PLK2 is present on residues Ser-590 and Ser-596. 3 disordered regions span residues 612–790, 846–903, and 1088–1158; these read HRMS…LSMS, VKRG…DNAR, and TQVE…HPDG. The segment covering 636 to 651 has biased composition (basic and acidic residues); the sequence is NRSEDLDHTAREKESE. Residues 680-690 show a composition bias toward polar residues; the sequence is QKSTSENQTEW. Residues 718-765 show a composition bias toward basic and acidic residues; that stretch reads STEDRERGISSREDSPQVCDDKGPFKDTRTQEDKRRDVDLDLSDKDYS. Phosphoserine is present on Ser-760. The span at 781-790 shows a compositional bias: low complexity; it reads PSRSSSLSMS. The interval 896 to 1338 is interaction with STIL; the sequence is QPPGDNARSQ…EGNVLMDTEL (443 aa).

Belongs to the TCP10 family. Forms homodimers. Associates with microtubules plus ends; binds to beta-tubulin subunits exposed on microtubule outer surface at its distal tip; also associates with microtubule lattice. Associated with the gamma-tubulin complex. Interacts with the head domain of EPB41. Interacts with LYST. Interacts with CEP152 (via C-terminus). Interacts with STIL. Forms a complex with STIL and SASS6. Phosphorylation at Ser-590 and Ser-596 by PLK2 is required for procentriole formation and centriole elongation. Phosphorylation by PLK2 oscillates during the cell cycle: it increases at G1/S transition and decreases during the exit from mitosis. Phosphorylation at Ser-596 is also mediated by PLK4 but is not a critical step in PLK4 function in procentriole assembly.

It localises to the cytoplasm. It is found in the cytoskeleton. The protein resides in the microtubule organizing center. Its subcellular location is the centrosome. The protein localises to the centriole. Plays an important role in cell division and centrosome function by participating in centriole duplication. Inhibits microtubule nucleation from the centrosome. Involved in the regulation of slow processive growth of centriolar microtubules. Acts as microtubule plus-end tracking protein that stabilizes centriolar microtubules and inhibits microtubule polymerization and extension from the distal ends of centrioles. Required for centriole elongation and for STIL-mediated centriole amplification. Required for the recruitment of CEP295 to the proximal end of new-born centrioles at the centriolar microtubule wall during early S phase in a PLK4-dependent manner. May be involved in the control of centriolar-microtubule growth by acting as a regulator of tubulin release. This Pan troglodytes (Chimpanzee) protein is Centrosomal P4.1-associated protein (CPAP).